A 215-amino-acid polypeptide reads, in one-letter code: Outer-membrane lipoprotein LolB (215 aa).

Residues 1–21 form the signal peptide; it reads MLIPKKYYLLIILLSNCLLAS. Residue C22 is the site of N-palmitoyl cysteine attachment. C22 carries the S-diacylglycerol cysteine lipid modification.

This sequence belongs to the LolB family. Monomer.

It is found in the cell outer membrane. Functionally, plays a critical role in the incorporation of lipoproteins in the outer membrane after they are released by the LolA protein. This Baumannia cicadellinicola subsp. Homalodisca coagulata protein is Outer-membrane lipoprotein LolB.